A 182-amino-acid polypeptide reads, in one-letter code: Ribosome-recycling factor (182 aa).

The protein belongs to the RRF family.

The protein resides in the cytoplasm. Its function is as follows. Responsible for the release of ribosomes from messenger RNA at the termination of protein biosynthesis. May increase the efficiency of translation by recycling ribosomes from one round of translation to another. The sequence is that of Ribosome-recycling factor from Synechocystis sp. (strain ATCC 27184 / PCC 6803 / Kazusa).